An 84-amino-acid polypeptide reads, in one-letter code: Large ribosomal subunit protein bL27 (84 aa).

Residues 1–20 (MAHKKGGGSTKNGRDSNPKY) form a disordered region.

Belongs to the bacterial ribosomal protein bL27 family.

This chain is Large ribosomal subunit protein bL27 (rpmA), found in Prosthecochloris vibrioformis (Chlorobium vibrioforme).